The chain runs to 51 residues: Large ribosomal subunit protein eL39 (51 aa).

It belongs to the eukaryotic ribosomal protein eL39 family.

In Picrophilus torridus (strain ATCC 700027 / DSM 9790 / JCM 10055 / NBRC 100828 / KAW 2/3), this protein is Large ribosomal subunit protein eL39.